We begin with the raw amino-acid sequence, 248 residues long: Carboxy-S-adenosyl-L-methionine synthase (248 aa).

Residues tyrosine 40, 65 to 67 (GCS), 95 to 96 (DN), 123 to 124 (DI), asparagine 138, and arginine 205 each bind S-adenosyl-L-methionine.

It belongs to the class I-like SAM-binding methyltransferase superfamily. Cx-SAM synthase family. Homodimer.

The catalysed reaction is prephenate + S-adenosyl-L-methionine = carboxy-S-adenosyl-L-methionine + 3-phenylpyruvate + H2O. Its function is as follows. Catalyzes the conversion of S-adenosyl-L-methionine (SAM) to carboxy-S-adenosyl-L-methionine (Cx-SAM). This Hahella chejuensis (strain KCTC 2396) protein is Carboxy-S-adenosyl-L-methionine synthase.